The sequence spans 372 residues: DNA replication and repair protein RecF (372 aa).

ATP is bound at residue 30–37 (GENAQGKT).

The protein belongs to the RecF family.

The protein localises to the cytoplasm. The RecF protein is involved in DNA metabolism; it is required for DNA replication and normal SOS inducibility. RecF binds preferentially to single-stranded, linear DNA. It also seems to bind ATP. The sequence is that of DNA replication and repair protein RecF from Exiguobacterium sp. (strain ATCC BAA-1283 / AT1b).